Here is a 565-residue protein sequence, read N- to C-terminus: Wee1-like protein kinase 2 (565 aa).

Disordered regions lie at residues 18-78 (YCEE…KSPE) and 169-191 (KSNG…GNVE). A compositionally biased stretch (acidic residues) spans 19–29 (CEEESESEGQE). Residues 31-51 (WETRDAHSQIPDRAEGQESEA) show a composition bias toward basic and acidic residues. Residue serine 76 is modified to Phosphoserine. Positions 173 to 175 (KRK) match the Nuclear localization signal motif. The Protein kinase domain maps to 214–492 (FLEVEKIGVG…ARSRVLRPSL (279 aa)). Residues 220-228 (IGVGEFGTV) and lysine 243 contribute to the ATP site. The Nuclear export signal motif lies at 317–331 (KLKDILLQISLGLKY). Aspartate 341 acts as the Proton acceptor in catalysis. Positions 346 and 382 each coordinate Mg(2+). The stretch at 495-521 (AEELQQQLNLEKFKTATLERELREAQQ) forms a coiled coil. The tract at residues 521–565 (QAWFSQEERGDAGVSGTPTGSRSTKRLVGGKSAKSSSFTWGKSSP) is disordered. Polar residues predominate over residues 553–565 (AKSSSFTWGKSSP).

Belongs to the protein kinase superfamily. Ser/Thr protein kinase family. WEE1 subfamily. In terms of processing, phosphorylation leads to increase its activity.

Its subcellular location is the nucleus. The enzyme catalyses L-tyrosyl-[protein] + ATP = O-phospho-L-tyrosyl-[protein] + ADP + H(+). Functionally, oocyte-specific protein tyrosine kinase that phosphorylates and inhibits CDK1 and acts as a key regulator of meiosis during both prophase I and metaphase II. Required to maintain meiotic arrest in oocytes during the germinal vesicle (GV) stage, a long period of quiescence at dictyate prophase I, by phosphorylating CDK1 at 'Tyr-15', leading to inhibit CDK1 activity and prevent meiotic reentry. Also required for metaphase II exit during egg activation by phosphorylating CDK1 at 'Tyr-15', to ensure exit from meiosis in oocytes and promote pronuclear formation. The chain is Wee1-like protein kinase 2 (WEE2) from Ailuropoda melanoleuca (Giant panda).